The chain runs to 136 residues: Small ribosomal subunit protein uS19 (136 aa).

Belongs to the universal ribosomal protein uS19 family.

Its function is as follows. Protein S19 forms a complex with S13 that binds strongly to the 16S ribosomal RNA. This chain is Small ribosomal subunit protein uS19, found in Methanosarcina mazei (strain ATCC BAA-159 / DSM 3647 / Goe1 / Go1 / JCM 11833 / OCM 88) (Methanosarcina frisia).